Reading from the N-terminus, the 377-residue chain is Mannan endo-1,4-beta-mannosidase A (377 aa).

Positions 1-18 (MKLSHMLLSLASLGVATA) are cleaved as a signal peptide. W84 serves as a coordination point for substrate. N-linked (GlcNAc...) asparagine glycosylation is present at N105. Substrate is bound at residue N197. The active-site Proton donor is the E198. The N-linked (GlcNAc...) asparagine glycan is linked to N255. Position 273 (Y273) interacts with substrate. E306 serves as the catalytic Nucleophile. The N-linked (GlcNAc...) asparagine glycan is linked to N326. A substrate-binding site is contributed by W336. The N-linked (GlcNAc...) asparagine glycan is linked to N357.

This sequence belongs to the glycosyl hydrolase 5 (cellulase A) family.

Its subcellular location is the secreted. The catalysed reaction is Random hydrolysis of (1-&gt;4)-beta-D-mannosidic linkages in mannans, galactomannans and glucomannans.. Functionally, endo-1,4-mannanase, a crucial enzyme for depolymerization of seed galactomannans and wood galactoglucomannans. The polypeptide is Mannan endo-1,4-beta-mannosidase A (manA) (Aspergillus aculeatus).